The following is a 229-amino-acid chain: 7-cyano-7-deazaguanine synthase (229 aa).

Residue leucine 7–leucine 17 participates in ATP binding. Residues cysteine 191, cysteine 204, cysteine 207, and cysteine 210 each contribute to the Zn(2+) site.

Belongs to the QueC family. It depends on Zn(2+) as a cofactor.

It carries out the reaction 7-carboxy-7-deazaguanine + NH4(+) + ATP = 7-cyano-7-deazaguanine + ADP + phosphate + H2O + H(+). Its pathway is purine metabolism; 7-cyano-7-deazaguanine biosynthesis. Catalyzes the ATP-dependent conversion of 7-carboxy-7-deazaguanine (CDG) to 7-cyano-7-deazaguanine (preQ(0)). This chain is 7-cyano-7-deazaguanine synthase, found in Cyanothece sp. (strain PCC 7425 / ATCC 29141).